The sequence spans 350 residues: Dihydroorotase (350 aa).

His17 and His19 together coordinate Zn(2+). Residues 19–21 (HLR) and Asn45 contribute to the substrate site. The Zn(2+) site is built by Lys103, His140, and His178. Lys103 carries the N6-carboxylysine modification. His140 contributes to the substrate binding site. Residue Leu223 coordinates substrate. Asp251 is a binding site for Zn(2+). Residue Asp251 is part of the active site. 2 residues coordinate substrate: His255 and Ala267.

This sequence belongs to the metallo-dependent hydrolases superfamily. DHOase family. Class II DHOase subfamily. Homodimer. It depends on Zn(2+) as a cofactor.

The enzyme catalyses (S)-dihydroorotate + H2O = N-carbamoyl-L-aspartate + H(+). The protein operates within pyrimidine metabolism; UMP biosynthesis via de novo pathway; (S)-dihydroorotate from bicarbonate: step 3/3. Functionally, catalyzes the reversible cyclization of carbamoyl aspartate to dihydroorotate. In Erwinia tasmaniensis (strain DSM 17950 / CFBP 7177 / CIP 109463 / NCPPB 4357 / Et1/99), this protein is Dihydroorotase.